We begin with the raw amino-acid sequence, 1133 residues long: Guanine nucleotide-binding protein G(s) subunit alpha isoforms XLas (1133 aa).

4 disordered regions span residues 1 to 195, 322 to 552, 611 to 648, and 724 to 744; these read MGMF…PEAL, DDTA…VPGA, SASA…WPDK, and RSRS…RKQM. The span at 31-48 shows a compositional bias: low complexity; that stretch reads LEAPGAAAPGAGAGPAEE. Over residues 347–362 the composition is skewed to basic and acidic residues; that stretch reads DKSECAERPPVEREAA. 5 stretches are compositionally biased toward low complexity: residues 391-404, 459-471, 482-498, 515-525, and 535-552; these read PEAM…AAQA, GGAA…TPAE, AEPA…ESAS, ATLAEPAARAA, and RAVP…VPGA. Positions 633–643 are enriched in pro residues; it reads PPTPRPPPRPT. Residues 732-744 are compositionally biased toward basic and acidic residues; the sequence is KAKDPMEERRKQM. A coiled-coil region spans residues 737–761; sequence MEERRKQMRKEAIEMREQKRADKKR. Residues 778-1133 enclose the G-alpha domain; sequence CTHRLLLLGA…RMHLRQYELL (356 aa). The segment at 781–794 is G1 motif; it reads RLLLLGAGESGKST. 786 to 794 is a GTP binding site; the sequence is GAGESGKST. Position 793 (Ser-793) interacts with Mg(2+). The segment at 807-828 is disordered; sequence FNGEGGEEDPQAARSNSDGEKA. The segment at 935–943 is G2 motif; the sequence is DLLRCRVLT. Residues 936 to 943, 962 to 966, and 1031 to 1034 each bind GTP; these read LLRCRVLT, DVGGQ, and NKQD. Arg-940 is subject to ADP-ribosylarginine; by cholera toxin. Thr-943 lines the Mg(2+) pocket. Residues 958-967 form a G3 motif region; it reads FHMFDVGGQR. Positions 1027-1034 are G4 motif; sequence ILFLNKQD. At Ser-1091 the chain carries Phosphoserine. Residues 1103-1108 form a G5 motif region; that stretch reads TCAVDT. Residue Ala-1105 coordinates GTP.

It belongs to the G-alpha family. G(s) subfamily. In terms of assembly, g proteins are composed of 3 units; alpha, beta and gamma. The alpha chain contains the guanine nucleotide binding site. Interacts through its N-terminal region with ALEX which is produced from the same locus in a different open reading frame. This interaction may inhibit its adenylyl cyclase-stimulating activity. Interacts with MAGED2.

The protein resides in the cell membrane. Its subcellular location is the apical cell membrane. It catalyses the reaction GTP + H2O = GDP + phosphate + H(+). In terms of biological role, guanine nucleotide-binding proteins (G proteins) function as transducers in numerous signaling pathways controlled by G protein-coupled receptors (GPCRs). The alpha chain contains the guanine nucleotide binding site and alternates between an active, GTP-bound state and an inactive, GDP-bound state. Signaling by an activated GPCR promotes GDP release and GTP binding. The alpha subunit has a low GTPase activity that converts bound GTP to GDP, thereby terminating the signal. Both GDP release and GTP hydrolysis are modulated by numerous regulatory proteins. Signaling involves the activation of adenylyl cyclases, resulting in increased levels of the signaling molecule cAMP. GNAS functions downstream of several GPCRs, including beta-adrenergic receptors. XLas isoforms interact with the same set of receptors as Gnas isoforms. This Mus musculus (Mouse) protein is Guanine nucleotide-binding protein G(s) subunit alpha isoforms XLas.